Reading from the N-terminus, the 140-residue chain is Putative pre-16S rRNA nuclease (140 aa).

It belongs to the YqgF nuclease family.

It is found in the cytoplasm. In terms of biological role, could be a nuclease involved in processing of the 5'-end of pre-16S rRNA. In Mannheimia succiniciproducens (strain KCTC 0769BP / MBEL55E), this protein is Putative pre-16S rRNA nuclease.